Here is a 220-residue protein sequence, read N- to C-terminus: Adenylate kinase (220 aa).

10-15 (GAGKGT) lines the ATP pocket. The tract at residues 30–59 (STGDMLRAAVKAGTPLGVEAKGYMDAGKLV) is NMP. AMP contacts are provided by residues T31, R36, 57–59 (KLV), 85–88 (GFPR), and Q92. Positions 122-159 (GRRTHPASGRTYHVKFNPPKVEGHDDVTGEPLIQRDDD) are LID. ATP contacts are provided by residues R123 and 132–133 (TY). Positions 156 and 167 each coordinate AMP. G206 contacts ATP.

The protein belongs to the adenylate kinase family. Monomer.

The protein localises to the cytoplasm. It carries out the reaction AMP + ATP = 2 ADP. It functions in the pathway purine metabolism; AMP biosynthesis via salvage pathway; AMP from ADP: step 1/1. Its function is as follows. Catalyzes the reversible transfer of the terminal phosphate group between ATP and AMP. Plays an important role in cellular energy homeostasis and in adenine nucleotide metabolism. The sequence is that of Adenylate kinase from Burkholderia lata (strain ATCC 17760 / DSM 23089 / LMG 22485 / NCIMB 9086 / R18194 / 383).